We begin with the raw amino-acid sequence, 309 residues long: Tagatose-6-phosphate kinase (309 aa).

The protein belongs to the carbohydrate kinase PfkB family. LacC subfamily.

The catalysed reaction is D-tagatofuranose 6-phosphate + ATP = D-tagatofuranose 1,6-bisphosphate + ADP + H(+). The protein operates within carbohydrate metabolism; D-tagatose 6-phosphate degradation; D-glyceraldehyde 3-phosphate and glycerone phosphate from D-tagatose 6-phosphate: step 1/2. In Streptococcus pneumoniae (strain Taiwan19F-14), this protein is Tagatose-6-phosphate kinase.